The sequence spans 147 residues: Nucleoside diphosphate kinase (147 aa).

Residues Lys-9, Phe-57, Arg-85, Thr-91, Arg-102, and Asn-112 each coordinate ATP. Thr-91 carries the post-translational modification Phosphothreonine. The active-site Pros-phosphohistidine intermediate is the His-115. Ser-122 carries the phosphoserine modification.

It belongs to the NDK family. Homotetramer. It depends on Mg(2+) as a cofactor.

It localises to the cytoplasm. The catalysed reaction is a 2'-deoxyribonucleoside 5'-diphosphate + ATP = a 2'-deoxyribonucleoside 5'-triphosphate + ADP. It carries out the reaction a ribonucleoside 5'-diphosphate + ATP = a ribonucleoside 5'-triphosphate + ADP. Functionally, major role in the synthesis of nucleoside triphosphates other than ATP. The ATP gamma phosphate is transferred to the NDP beta phosphate via a ping-pong mechanism, using a phosphorylated active-site intermediate. The sequence is that of Nucleoside diphosphate kinase from Halalkalibacterium halodurans (strain ATCC BAA-125 / DSM 18197 / FERM 7344 / JCM 9153 / C-125) (Bacillus halodurans).